The chain runs to 209 residues: Ribosomal RNA small subunit methyltransferase G (209 aa).

Residues Gly72, Leu77, 123–124 (AE), and Arg138 contribute to the S-adenosyl-L-methionine site.

The protein belongs to the methyltransferase superfamily. RNA methyltransferase RsmG family.

Its subcellular location is the cytoplasm. In terms of biological role, specifically methylates the N7 position of guanine in position 518 of 16S rRNA. The sequence is that of Ribosomal RNA small subunit methyltransferase G from Leifsonia xyli subsp. xyli (strain CTCB07).